We begin with the raw amino-acid sequence, 307 residues long: Ribonuclease Z (307 aa).

7 residues coordinate Zn(2+): His63, His65, Asp67, His68, His141, Asp212, and His270. Asp67 functions as the Proton acceptor in the catalytic mechanism.

This sequence belongs to the RNase Z family. As to quaternary structure, homodimer. The cofactor is Zn(2+).

The enzyme catalyses Endonucleolytic cleavage of RNA, removing extra 3' nucleotides from tRNA precursor, generating 3' termini of tRNAs. A 3'-hydroxy group is left at the tRNA terminus and a 5'-phosphoryl group is left at the trailer molecule.. Functionally, zinc phosphodiesterase, which displays some tRNA 3'-processing endonuclease activity. Probably involved in tRNA maturation, by removing a 3'-trailer from precursor tRNA. The chain is Ribonuclease Z from Bacillus cereus (strain G9842).